Consider the following 1520-residue polypeptide: MMNQQQQQQQPPTTSPTQQQQLTQLQTHQYFQNKFKLFYKRELDEADPLEIYWRECYDKIELLLLNSSEAEINNYLIEKSASVESSGNNDQSNKFHTEVTIGFLYAILLGSPQNIALSHQYFKSLTFFTKDSLALFCSLLKKLIADKFQKLNDTPRQQVVWIINELIATNHQDCESVTSIILRHIYGGNFTSKNLSLSHSMLNMFLTHRQWLNSRPLLIPTILYNFLRLIQDHISRPQGLHNPTHLKDEINFCLDLLKNKFQECLVIGRDLIRLLQYLSTKTIEFEQLWKDLNSKPTTFAPGYYDIIQSMKTPTPKHFLQSRLSPEMELQVLYILKEVKFGNQKRYQQWFVTKYLVTPESESLIPDIIRYICCVYHPPNHVLCSDIVPRWAIIGWLLKHCKSDAWRNYSKLSLFLDWLYFEPKIDSIMNIEPAILLMAGSVKKYADMTIDLVEFIVGTLLDSYDIQRKDAIRQGIHNSFATVLEKGVVQSLSHVFPPDSLGPSLFEKVKHYFHQFLTNSPIHQLHSQQQQLQQQQLQQPQQPQQQQQPPQYKPYPQQPINKQLPLQMSPQQQSQQQLQQQQLQQQLQQQQQQQQPPQQPPPQQQPQQQPPQQQPQQQPQQQQPQLNISTGNLPNIQQPMVKSPPLSSNTLVSPTSSSSPTSSNLPTNNSRVLNKSGVDIHHVSNLSPQVISQKPQSQQTPSLHSSSQSVLQQKSPPLKETSLFEQQQPSQQLPSQIVKNSPPNLSMTNENISNPPPPPHAKISSDHASPLINSSNSNITTPNPDSQSQIPIPPPISQSPSTKNIDVIMSELNDEPPKLSKSSPTQSNIIVPPPTHKPPQTTISSSSPLLQPQTQPQPQTQPQPQTLQQSTTPSLSSSSTPTIPISPPLLPTQLEIDIQPPPPPPSSQPLQPPPPPPPSQNIKDETLNSLIELNSSIKLDEEIKMEIPDILLTIGSKPQFQPTNITITLGSILSNFNEKISKQPNITLQNELTDSLTQYLSQVLKPELQIDLSTTPSLLSLFCNFQVIHHIFRATFSPTDNSITTTTTTTAAATTTTTTTPTIVKPMFNILKELYKIYPSIGFKIMIWSIITSPGGLNITNNGCTYIYPDIECDNSFSNSDDNESTNNNNNGVEQKPQQQQQQQQQQQINENTHNNNNNNNNNNNNNNNNNNENNITNNSQNITIKEESIFKIEKLLESVQDSNGNRNILGNYLNFHSNLLGGQPPPPPPPQQPNKIVEQIISDCIEANNVGAFNYLVPILYKSFSNLLVGNSDFLYLVLSCINPRQHFRICNKISMGEFRVFGNEMKSLISQSFKWESFEQNYLWQMLIAEDSVYSGMIVKEYPFIISKLDPYNNSEVLQNLTITLKETKFYDFNIFSETLLLNDYFYTFVFCLFSFWLKNNTTQTFNYINQIFDFYLSNNNNNNNNNRKLVERILYFYNIFLKKYGEERIKWSDMIDSDRVSKVLQRSTNSNLFQKYSNLGSLVLPSQSSNIKNDNNPTLSKHQNSDDDSNPKKRFRKE.

6 disordered regions span residues 1–23 (MMNQ…QQLT), 523–671 (QLHS…NSRV), 689–801 (VISQ…SPST), 813–922 (DEPP…QNIK), 1116–1177 (FSNS…NITN), and 1489–1520 (QSSN…FRKE). Composition is skewed to low complexity over residues 527–549 (QQQQ…QQPP) and 557–595 (QPIN…QQQP). The segment covering 596-612 (PQQPPPQQQPQQQPPQQ) has biased composition (pro residues). Residues 613-625 (QPQQQPQQQQPQL) show a composition bias toward low complexity. The segment covering 626–639 (NISTGNLPNIQQPM) has biased composition (polar residues). Low complexity-rich tracts occupy residues 642-669 (SPPL…TNNS), 694-717 (PQSQ…SPPL), and 725-735 (QQQPSQQLPSQ). Residues 736-752 (IVKNSPPNLSMTNENIS) show a composition bias toward polar residues. Over residues 768–789 (SPLINSSNSNITTPNPDSQSQI) the composition is skewed to low complexity. Polar residues predominate over residues 819 to 828 (SKSSPTQSNI). Residues 837–882 (PPQTTISSSSPLLQPQTQPQPQTQPQPQTLQQSTTPSLSSSSTPTI) are compositionally biased toward low complexity. The segment covering 898–918 (QPPPPPPSSQPLQPPPPPPPS) has biased composition (pro residues). Low complexity-rich tracts occupy residues 1116 to 1130 (FSNS…NNNN) and 1137 to 1177 (QQQQ…NITN). Over residues 1489-1504 (QSSNIKNDNNPTLSKH) the composition is skewed to polar residues.

This sequence belongs to the Integrator subunit 3 family. Component of the Integrator complex. The core complex associates with protein phosphatase 2A subunits, to form the Integrator-PP2A (INTAC) complex. Component of the SOSS complex.

The protein resides in the nucleus. The protein localises to the cytoplasm. Its function is as follows. Component of the integrator complex, a multiprotein complex that terminates RNA polymerase II (Pol II) transcription in the promoter-proximal region of genes. The integrator complex provides a quality checkpoint during transcription elongation by driving premature transcription termination of transcripts that are unfavorably configured for transcriptional elongation: the complex terminates transcription by (1) catalyzing dephosphorylation of the C-terminal domain (CTD) of Pol II subunit polr2a, (2) degrading the exiting nascent RNA transcript via endonuclease activity and (3) promoting the release of Pol II from bound DNA. The integrator complex is also involved in terminating the synthesis of non-coding Pol II transcripts, such as enhancer RNAs (eRNAs), small nuclear RNAs (snRNAs), telomerase RNAs and long non-coding RNAs (lncRNAs). In terms of biological role, component of the SOSS complex, a multiprotein complex that functions downstream of the MRN complex to promote DNA repair and G2/M checkpoint. The SOSS complex associates with single-stranded DNA at DNA lesions and influences diverse endpoints in the cellular DNA damage response including cell-cycle checkpoint activation, recombinational repair and maintenance of genomic stability. The SOSS complex is required for efficient homologous recombination-dependent repair of double-strand breaks (DSBs) and ATM-dependent signaling pathways. In the SOSS complex, it is required for the assembly of the complex and for stabilization of the complex at DNA damage sites. The sequence is that of Integrator complex subunit 3 homolog (ints3) from Dictyostelium discoideum (Social amoeba).